The following is a 609-amino-acid chain: Dihydroxy-acid dehydratase (609 aa).

Asp81 lines the Mg(2+) pocket. A [2Fe-2S] cluster-binding site is contributed by Cys122. Mg(2+)-binding residues include Asp123 and Lys124. Lys124 is subject to N6-carboxylysine. Cys195 contacts [2Fe-2S] cluster. Residue Glu491 coordinates Mg(2+). Catalysis depends on Ser517, which acts as the Proton acceptor.

The protein belongs to the IlvD/Edd family. As to quaternary structure, homodimer. [2Fe-2S] cluster is required as a cofactor. Requires Mg(2+) as cofactor.

The catalysed reaction is (2R)-2,3-dihydroxy-3-methylbutanoate = 3-methyl-2-oxobutanoate + H2O. It catalyses the reaction (2R,3R)-2,3-dihydroxy-3-methylpentanoate = (S)-3-methyl-2-oxopentanoate + H2O. The protein operates within amino-acid biosynthesis; L-isoleucine biosynthesis; L-isoleucine from 2-oxobutanoate: step 3/4. Its pathway is amino-acid biosynthesis; L-valine biosynthesis; L-valine from pyruvate: step 3/4. Its function is as follows. Functions in the biosynthesis of branched-chain amino acids. Catalyzes the dehydration of (2R,3R)-2,3-dihydroxy-3-methylpentanoate (2,3-dihydroxy-3-methylvalerate) into 2-oxo-3-methylpentanoate (2-oxo-3-methylvalerate) and of (2R)-2,3-dihydroxy-3-methylbutanoate (2,3-dihydroxyisovalerate) into 2-oxo-3-methylbutanoate (2-oxoisovalerate), the penultimate precursor to L-isoleucine and L-valine, respectively. The chain is Dihydroxy-acid dehydratase from Acinetobacter baumannii (strain ATCC 17978 / DSM 105126 / CIP 53.77 / LMG 1025 / NCDC KC755 / 5377).